Reading from the N-terminus, the 83-residue chain is UPF0297 protein LCK_00468 (83 aa).

The protein belongs to the UPF0297 family.

The chain is UPF0297 protein LCK_00468 from Leuconostoc citreum (strain KM20).